A 341-amino-acid chain; its full sequence is Geranylgeranyl pyrophosphate synthase penG (341 aa).

Residues K68, R71, and H100 each contribute to the isopentenyl diphosphate site. Mg(2+) contacts are provided by D107 and D111. R116 contacts dimethylallyl diphosphate. R117 lines the isopentenyl diphosphate pocket. 3 residues coordinate dimethylallyl diphosphate: K194, T195, and Q228. A Mg(2+)-binding site is contributed by D231. Residues N235, K245, and K255 each contribute to the dimethylallyl diphosphate site.

It belongs to the FPP/GGPP synthase family. Mg(2+) is required as a cofactor.

It carries out the reaction isopentenyl diphosphate + dimethylallyl diphosphate = (2E)-geranyl diphosphate + diphosphate. It catalyses the reaction isopentenyl diphosphate + (2E)-geranyl diphosphate = (2E,6E)-farnesyl diphosphate + diphosphate. The enzyme catalyses isopentenyl diphosphate + (2E,6E)-farnesyl diphosphate = (2E,6E,10E)-geranylgeranyl diphosphate + diphosphate. It participates in secondary metabolite biosynthesis. Its function is as follows. Geranylgeranyl pyrophosphate synthase; part of the gene cluster that mediates the biosynthesis of the indole diterpenes penitrems. The geranylgeranyl diphosphate (GGPP) synthase penG catalyzes the first step in penitrem biosynthesis via conversion of farnesyl pyrophosphate and isopentyl pyrophosphate into geranylgeranyl pyrophosphate (GGPP). Condensation of indole-3-glycerol phosphate with GGPP by the prenyl transferase penC then forms 3-geranylgeranylindole (3-GGI). Epoxidation by the FAD-dependent monooxygenase penM leads to a epoxidized-GGI that is substrate of the terpene cyclase penB for cyclization to yield paspaline. Paspaline is subsequently converted to 13-desoxypaxilline by the cytochrome P450 monooxygenase penP, the latter being then converted to paxilline by the cytochrome P450 monooxygenase penQ. Paxilline is converted to beta-paxitriol via C-10 ketoreduction by the short-chain dehydrogenase PC-15 which can be monoprenylated at the C-20 by the indole diterpene prenyltransferase penD. A two-step elimination (acetylation and elimination) process performed by the O-acetyltransferase PC-16 and the P.simplicissimum ptmI-ortholog not yet identified in P.crustosum, leads to the production of the prenylated form of penijanthine. The FAD-linked oxidoreductase ptmO then converts the prenylated form of penijanthine into PC-M5 which is in turn transformed into PC-M4 by the aromatic dimethylallyltransferase PC-22. A series of oxidation steps involving 4 cytochrome P450 monooxygenases (PC-21, PC-05, PC-23, PC-20) and a FAD-dependent monooxygenase (PC-14) are required for the transformation of PC-M4 to penitrems A and E. Synthesis of these final products is proposed to proceed via penitrems D and C (PC-21, PC-05, PC-14) and penitrems B and F (PC-21, PC-05, PC-14, PC-23). This chain is Geranylgeranyl pyrophosphate synthase penG, found in Penicillium crustosum (Blue mold fungus).